The sequence spans 210 residues: MGSSSGQSGYDLSFKILLIGDSGVGKSSLLVSFISSSVEDLAPTIGVDFKIKQLTVGGKRLKLTIWDTAGQERFRTLTSSYYRGAQGIILVYDVTRRETFTNLVDVWGKEIELYSTNQECVRMLVGNKVDRESERGVSREEGIALAKELNCMFLECSARTRQNVEQCFEELALKIMEVPSLLEEGSSAVKRNILKQKPEHQTNTQSGCCS.

A GTP-binding site is contributed by G20 to S27. The Effector region signature appears at L41–F49. GTP-binding positions include D67–Q71, N127–D130, and S157–A158. Residues C208 and C209 are each lipidated (S-geranylgeranyl cysteine).

Belongs to the small GTPase superfamily. Rab family. As to quaternary structure, interacts with XI-2/MYA2.

The protein localises to the cell membrane. It localises to the cytoplasm. Its function is as follows. Intracellular vesicle trafficking and protein transport. This chain is Ras-related protein RABC2a (RABC2A), found in Arabidopsis thaliana (Mouse-ear cress).